The primary structure comprises 570 residues: MSEKHPGPLVVEGKLTDAERMKLESNYLRGTIAEDLNDGLTGGFKGDNFLLIRFHGMYQQDDRDIRAERAEQKLEPRHAMLLRCRLPGGVITTKQWQAIDKFAGENTIYGSIRLTNRQTFQFHGILKKNVKPVHQMLHSVGLDALATANDMNRNVLCTSNPYESQLHAEAYEWAKKISEHLLPRTRAYAEIWLDQEKVATTDEEPILGQTYLPRKFKTTVVIPPQNDIDLHANDMNFVAIAENGKLVGFNLLVGGGLSIEHGNKKTYARTASEFGYLPLEHTLAVAEAVVTTQRDWGNRTDRKNAKTKYTLERVGVETFKAEVERRAGIKFEPIRPYEFTGRGDRIGWVKGIDDNWHLTLFIENGRILDYPARPLKTGLLEIAKIHKGDFRITANQNLIIAGVPESEKAKIEKIAKESGLMNAVTPQRENSMACVSFPTCPLAMAEAERFLPSFIDNIDNLMAKHGVSDEHIVMRVTGCPNGCGRAMLAEVGLVGKAPGRYNLHLGGNRIGTRIPRMYKENITEPEILASLDELIGRWAKEREAGEGFGDFTVRAGIIRPVLDPARDLWD.

Positions 434, 440, 479, and 483 each coordinate [4Fe-4S] cluster. Cysteine 483 contributes to the siroheme binding site.

The protein belongs to the nitrite and sulfite reductase 4Fe-4S domain family. In terms of assembly, alpha(8)-beta(8). The alpha component is a flavoprotein, the beta component is a hemoprotein. Siroheme is required as a cofactor. The cofactor is [4Fe-4S] cluster.

The catalysed reaction is hydrogen sulfide + 3 NADP(+) + 3 H2O = sulfite + 3 NADPH + 4 H(+). It functions in the pathway sulfur metabolism; hydrogen sulfide biosynthesis; hydrogen sulfide from sulfite (NADPH route): step 1/1. Its function is as follows. Component of the sulfite reductase complex that catalyzes the 6-electron reduction of sulfite to sulfide. This is one of several activities required for the biosynthesis of L-cysteine from sulfate. This Escherichia coli (strain B / BL21-DE3) protein is Sulfite reductase [NADPH] hemoprotein beta-component.